The chain runs to 586 residues: MLIRLKKRKILQVIVSAVVLILFFCSVHNDVSSSWLYGKKLRLPVLTRSNLKNNFYTTLVQAIVENKPTDSSPDLSKLHGAEGCSFANNVAAHDSGHDSDLSYESLSKCYNLNKTVQESLREVHSKFTDTLSGKLNFSIPQREALFSGSEGIVTIGGGKYSVLAYTMIKKLRDTGTTLPIEVIIPPQDEGEDDFCKNWLPKFNGKCIYFSDIVPSKPLSDLKLTHFQLKVFGLIISSFKRIIFLDADNYAVKNLDLAFNTTSFNDTGLILWPDFWRRVTPPAFYNIIGSSIDIGKRVRFVSDDISPVSRYDPFVSNSNDYTPKERQEHFLKHVPLHDLDGTMPDLSSESGQMVIDKIRHFNTLLLALYYNVYGPTWYYKMISQGTAGEGDKDTFVAAAHALNMPYYQVRTKFEFDGFFYQKDDYKGLALLQHDFEQDYKQYQKAQQEVKANIEEFSKLDPDYTLDNGFLKTLMVNDDGSDLDIMFIHASFYKADPWTLYHENRFIGPNGEQVRGFRKPHRYGMDFELFLFNDMSKSFCTTPKSQVIKFKYFTDKVNTPEWDAMCEYLTNHVNYLESTHKEAMGEKN.

The first 29 residues, 1-29, serve as a signal peptide directing secretion; sequence MLIRLKKRKILQVIVSAVVLILFFCSVHN. N-linked (GlcNAc...) asparagine glycosylation is found at N113, N136, N259, and N264.

The protein belongs to the MNN1/MNT family. Post-translationally, glycosylated.

It is found in the golgi apparatus. Its subcellular location is the cis-Golgi network. Its pathway is protein modification; protein glycosylation. Its function is as follows. Responsible for addition of first and second mannose residues to the outer chain of core N-linked polysaccharides and to O-linked mannotriose. Implicated in late Golgi modifications. The protein is Alpha-1,2-mannosyltransferase MNN5 (MNN5) of Saccharomyces cerevisiae (strain YJM789) (Baker's yeast).